A 303-amino-acid polypeptide reads, in one-letter code: tRNA pseudouridine synthase B (303 aa).

Residue Asp-38 is the Nucleophile of the active site.

The protein belongs to the pseudouridine synthase TruB family. Type 1 subfamily.

The enzyme catalyses uridine(55) in tRNA = pseudouridine(55) in tRNA. Responsible for synthesis of pseudouridine from uracil-55 in the psi GC loop of transfer RNAs. This Levilactobacillus brevis (strain ATCC 367 / BCRC 12310 / CIP 105137 / JCM 1170 / LMG 11437 / NCIMB 947 / NCTC 947) (Lactobacillus brevis) protein is tRNA pseudouridine synthase B.